The chain runs to 473 residues: Photosystem II CP43 reaction center protein (473 aa).

The propeptide occupies 1–14 (MKTLYSLRRFYPVE). T15 bears the N-acetylthreonine mark. T15 is modified (phosphothreonine). A run of 5 helical transmembrane segments spans residues 69 to 93 (LFEV…PHLA), 134 to 155 (LLGP…KDRN), 178 to 200 (KALY…RKIT), 255 to 275 (KPFA…LSYS), and 291 to 312 (WFNN…ASQA). E367 provides a ligand contact to [CaMn4O5] cluster. A helical transmembrane segment spans residues 447-471 (RARAAAAGFEKGIDRDFEPVLSMTP).

Belongs to the PsbB/PsbC family. PsbC subfamily. PSII is composed of 1 copy each of membrane proteins PsbA, PsbB, PsbC, PsbD, PsbE, PsbF, PsbH, PsbI, PsbJ, PsbK, PsbL, PsbM, PsbT, PsbX, PsbY, PsbZ, Psb30/Ycf12, at least 3 peripheral proteins of the oxygen-evolving complex and a large number of cofactors. It forms dimeric complexes. Binds multiple chlorophylls and provides some of the ligands for the Ca-4Mn-5O cluster of the oxygen-evolving complex. It may also provide a ligand for a Cl- that is required for oxygen evolution. PSII binds additional chlorophylls, carotenoids and specific lipids. is required as a cofactor.

The protein localises to the plastid. Its subcellular location is the chloroplast thylakoid membrane. One of the components of the core complex of photosystem II (PSII). It binds chlorophyll and helps catalyze the primary light-induced photochemical processes of PSII. PSII is a light-driven water:plastoquinone oxidoreductase, using light energy to abstract electrons from H(2)O, generating O(2) and a proton gradient subsequently used for ATP formation. The protein is Photosystem II CP43 reaction center protein of Calycanthus floridus var. glaucus (Eastern sweetshrub).